A 304-amino-acid polypeptide reads, in one-letter code: MSLNPPIFLKRSEENNSKFVETKQSQTTSIASEDPLQNLCLASQEVLQKAQQSGRSKCLKCGGSRMFYCYTCYVPVENVPIEQIPLVKLPLKIDIIKHPNETDGKSTAIHAKLLAPEFVNIYTYPCIPEYEEKDHEVALVFPGPQSISIKDISFHLQKRIQNNVRGKNDDPDKPSFKRKRAEEQEFCDLNDSKCKGTTLKKIIFIDSTWNQTNKIFTDERLQGLLQVELKTRKTCFWRHQKGKPDTFLSTIEAIYYFLVDYHTDILKEKYRGQYDNLLFFYSFMYQLIKNAKCSGDKETGKLTH.

N-acetylserine is present on Ser-2. The DXTW motif lies at 206 to 209 (DSTW).

The protein belongs to the TDD superfamily. DTWD1 family.

It is found in the nucleus. It carries out the reaction a uridine in tRNA + S-adenosyl-L-methionine = a 3-[(3S)-3-amino-3-carboxypropyl]uridine in tRNA + S-methyl-5'-thioadenosine + H(+). Its function is as follows. Catalyzes the formation of 3-(3-amino-3-carboxypropyl)uridine (acp3U) at position 20 in the D-loop of several cytoplasmic tRNAs (acp3U(20)). This chain is tRNA-uridine aminocarboxypropyltransferase 1, found in Pongo abelii (Sumatran orangutan).